Here is a 240-residue protein sequence, read N- to C-terminus: 2,3,4,5-tetrahydropyridine-2,6-dicarboxylate N-acetyltransferase (240 aa).

It belongs to the transferase hexapeptide repeat family. DapH subfamily.

The catalysed reaction is (S)-2,3,4,5-tetrahydrodipicolinate + acetyl-CoA + H2O = L-2-acetamido-6-oxoheptanedioate + CoA. It functions in the pathway amino-acid biosynthesis; L-lysine biosynthesis via DAP pathway; LL-2,6-diaminopimelate from (S)-tetrahydrodipicolinate (acetylase route): step 1/3. Functionally, catalyzes the transfer of an acetyl group from acetyl-CoA to tetrahydrodipicolinate. The protein is 2,3,4,5-tetrahydropyridine-2,6-dicarboxylate N-acetyltransferase of Bacillus mycoides (strain KBAB4) (Bacillus weihenstephanensis).